Consider the following 418-residue polypeptide: Dwarfin sma-2 (418 aa).

Residues 8–134 (KKITERLKWK…YKRVHATGVL (127 aa)) enclose the MH1 domain. 4 residues coordinate Zn(2+): Cys-62, Cys-107, Cys-119, and His-124. In terms of domain architecture, MH2 spans 222–418 (WATVSYYELN…PTPRPISSIS (197 aa)).

It belongs to the dwarfin/SMAD family.

The protein resides in the cytoplasm. Its subcellular location is the nucleus. Involved in TGF-beta pathway. Plays a role in male tail tip morphogenesis. This Caenorhabditis elegans protein is Dwarfin sma-2.